Consider the following 991-residue polypeptide: Valine--tRNA ligase (991 aa).

The short motif at 43–53 is the 'HIGH' region element; the sequence is PNVTGTLHMGH. The short motif at 582-586 is the 'KMSKS' region element; that stretch reads KMSKS. Lysine 585 is a binding site for ATP. Positions 689–711 are disordered; sequence AHSPAQHQAGQDGQDAPRTPQPR. Over residues 693 to 704 the composition is skewed to low complexity; the sequence is AQHQAGQDGQDA. Positions 925–988 form a coiled coil; it reads LIDVDAERAR…TQLNGLRERR (64 aa).

It belongs to the class-I aminoacyl-tRNA synthetase family. ValS type 1 subfamily. In terms of assembly, monomer.

The protein resides in the cytoplasm. The enzyme catalyses tRNA(Val) + L-valine + ATP = L-valyl-tRNA(Val) + AMP + diphosphate. In terms of biological role, catalyzes the attachment of valine to tRNA(Val). As ValRS can inadvertently accommodate and process structurally similar amino acids such as threonine, to avoid such errors, it has a 'posttransfer' editing activity that hydrolyzes mischarged Thr-tRNA(Val) in a tRNA-dependent manner. The polypeptide is Valine--tRNA ligase (Xylella fastidiosa (strain M12)).